A 151-amino-acid polypeptide reads, in one-letter code: UPF0208 membrane protein Spro_3315 (151 aa).

Transmembrane regions (helical) follow at residues 46–64 (FAVR…WQIA) and 70–90 (GPAI…LWWL).

The protein belongs to the UPF0208 family.

The protein resides in the cell inner membrane. In Serratia proteamaculans (strain 568), this protein is UPF0208 membrane protein Spro_3315.